Consider the following 348-residue polypeptide: Ion-translocating oxidoreductase complex subunit D (348 aa).

5 consecutive transmembrane segments (helical) span residues 15 to 35 (LTAKFMLWVMVAMLPALGMQA), 36 to 56 (YFFGYGVFIQVFIALLLAVAI), 67 to 87 (LTAFYVADLSGVLTALILAIS), 88 to 108 (IPPYAPYWIIVIGIIVALLLA), and 125 to 145 (VAYALLLVSFPVQMTGWLVPI). Thr186 bears the FMN phosphoryl threonine mark. The next 5 helical transmembrane spans lie at 212–232 (LFANGWWQINLAFLAGGLLLI), 241–261 (IPAAMLGMFALLSGLTDLLLP), 265–285 (LNVVSQLFSGAMMFGAFFIAT), 298–318 (LIFGGLIGLFVYLIRYYGNYP), and 320–340 (AVAFSVLLANICVPLIDHYTQ).

The protein belongs to the NqrB/RnfD family. In terms of assembly, the complex is composed of six subunits: RnfA, RnfB, RnfC, RnfD, RnfE and RnfG. Requires FMN as cofactor.

It localises to the cell inner membrane. Its function is as follows. Part of a membrane-bound complex that couples electron transfer with translocation of ions across the membrane. This is Ion-translocating oxidoreductase complex subunit D from Actinobacillus pleuropneumoniae serotype 3 (strain JL03).